Reading from the N-terminus, the 687-residue chain is Dictomallein (687 aa).

2 disordered regions span residues 1–45 (MGNG…SRRL) and 73–112 (TAGG…STSA). The Peptidase M66 domain occupies 233-501 (PVFGTDADVQ…QAWIASRVLA (269 aa)). Histidine 393 contributes to the Zn(2+) binding site. Residue glutamate 394 is part of the active site. 2 residues coordinate Zn(2+): histidine 397 and histidine 403.

It belongs to the dictomallein family. Zn(2+) serves as cofactor.

The sequence is that of Dictomallein (dtmL) from Burkholderia pseudomallei (strain 1710b).